The primary structure comprises 1813 residues: Latent-transforming growth factor beta-binding protein 2 (1813 aa).

Positions 1 to 35 (MRAPTTARCSGCIQRVRWRGFLPLVLAVLMGTSHA) are cleaved as a signal peptide. The interval 94-115 (NPGWLAEAEARRPPRTQQLRRV) is heparin-binding. Residues 103–152 (ARRPPRTQQLRRVQPPVQTRRSHPRGQQQIAARAAPSVARLETPQRPAAA) form a disordered region. Residues 108–132 (RTQQLRRVQPPVQTRRSHPRGQQQI) are compositionally biased toward polar residues. Residue N175 is glycosylated (N-linked (GlcNAc...) asparagine). In terms of domain architecture, EGF-like 1 spans 181-213 (IKPVCQPPCQNRGSCSRPQVCICRSGFRGARCE). Disulfide bonds link C185–C195, C189–C201, and C203–C212. Residues 220–305 (EFDPQNARPV…QLMSNALPSG (86 aa)) form a disordered region. A heparin-binding region spans residues 226-243 (ARPVPRRSVERAPGPHRS). Positions 257-266 (LVPPPSPPPS) are enriched in pro residues. Residues 293 to 302 (ANGQLMSNAL) are compositionally biased toward polar residues. The N-linked (GlcNAc...) asparagine glycan is linked to N328. 329 to 339 (LTEKIKKIKVV) serves as a coordination point for heparin. The 33-residue stretch at 381–413 (RIYFCQIPCLNGGRCIGRDECWCPANSTGKFCH) folds into the EGF-like 2 domain. Intrachain disulfides connect C385-C395, C389-C401, and C403-C412. N406 is a glycosylation site (N-linked (GlcNAc...) asparagine). The residue at position 491 (S491) is a Phosphoserine. The tract at residues 492–524 (VETRASHRPHGNLGHSPWASNSIPARAGEAPRP) is disordered. Residues 536-588 (GQCYLSTVNGQCANPLGSLTSQEDCCGSVGTFWGVTSCAPCPPRQEGPAFPVI) form the TB 1 domain. Cystine bridges form between C538/C560, C547/C573, and C561/C576. A glycan (N-linked (GlcNAc...) asparagine) is linked at N603. One can recognise an EGF-like 3; calcium-binding domain in the interval 609–649 (DINECLTLGLCKDSECVNTRGSYLCTCRPGLMLDPSRSRCV). Intrachain disulfides connect C613-C624, C619-C633, C635-C648, C661-C683, C670-C696, C684-C699, and C685-C711. The 53-residue stretch at 659–711 (GLCYRSLGSGTCTLPLVHRITKQICCCSRVGKAWGSTCEQCPLPGTEAFREIC) folds into the TB 2 domain. Disordered regions lie at residues 730–761 (KAEE…QPLR) and 787–819 (SAPH…PAEE). In terms of domain architecture, EGF-like 4 spans 835 to 877 (DFDPCFAGASNICGPGTCVSLPNGYRCVCSPGYQLHPSQDYCT). 49 disulfide bridges follow: C839-C852, C847-C861, C863-C876, C882-C893, C887-C902, C904-C919, C925-C936, C931-C945, C947-C959, C965-C976, C971-C985, C988-C999, C1005-C1016, C1011-C1025, C1027-C1040, C1046-C1057, C1052-C1066, C1069-C1082, C1088-C1099, C1094-C1108, C1111-C1124, C1130-C1142, C1137-C1151, C1153-C1165, C1171-C1183, C1177-C1192, C1194-C1207, C1213-C1224, C1219-C1233, C1235-C1249, C1255-C1268, C1263-C1277, C1281-C1293, C1299-C1311, C1305-C1320, C1322-C1335, C1341-C1353, C1348-C1362, C1364-C1378, C1405-C1428, C1415-C1440, C1429-C1443, C1430-C1455, C1481-C1494, C1489-C1503, C1505-C1518, C1524-C1534, C1529-C1543, and C1545-C1558. The 43-residue stretch at 878 to 920 (DDNECMRNPCEGRGRCVNSVGSYSCLCYPGYTLVTLGDTQECQ) folds into the EGF-like 5; calcium-binding domain. One can recognise an EGF-like 6; calcium-binding domain in the interval 921–960 (DIDECEQPGVCSGGRCSNTEGSYHCECDRGYIMVRKGHCQ). The EGF-like 7; calcium-binding domain maps to 961–1000 (DINECRHPGTCPDGRCVNSPGSYTCLACEEGYVGQSGSCV). Residues 1001–1041 (DVNECLTPGICTHGRCINMEGSFRCSCEPGYEVTPDKKGCR) form the EGF-like 8; calcium-binding domain. Residues 1042–1083 (DVDECASRASCPTGLCLNTEGSFTCSACQSGYWVNEDGTACE) enclose the EGF-like 9; calcium-binding domain. Positions 1084 to 1125 (DLDECAFPGVCPTGVCTNTVGSFSCKDCDQGYRPNPLGNRCE) constitute an EGF-like 10; calcium-binding domain. The 41-residue stretch at 1126–1166 (DVDECEGPQSSCRGGECKNTEGSYQCLCHQGFQLVNGTMCE) folds into the EGF-like 11; calcium-binding domain. Residue N1161 is glycosylated (N-linked (GlcNAc...) asparagine). In terms of domain architecture, EGF-like 12; calcium-binding spans 1167–1208 (DVNECVGEEHCAPHGECLNSLGSFFCLCAPGFASAEGGTRCQ). Residues 1209–1250 (DVDECAATDPCPGGHCVNTEGSFSCLCETASFQPSPDSGECL) form the EGF-like 13; calcium-binding domain. The EGF-like 14; calcium-binding domain maps to 1251–1294 (DIDECEDREDPVCGAWRCENSPGSYRCILDCQPGFYVAPNGDCI). In terms of domain architecture, EGF-like 15; calcium-binding spans 1295–1336 (DIDECANDTVCGNHGFCDNTDGSFRCLCDQGFETSPSGWECV). N1301 is a glycosylation site (N-linked (GlcNAc...) asparagine). The 43-residue stretch at 1337–1379 (DVNECELMMAVCGDALCENVEGSFLCLCASDLEEYDAEEGHCR) folds into the EGF-like 16; calcium-binding domain. One can recognise a TB 3 domain in the interval 1403–1455 (MECYSEHNGGPPCSQILGQNSTQAECCCTQGARWGKACAPCPSEDSVEFSQLC). N1422 is a glycosylation site (N-linked (GlcNAc...) asparagine). The 43-residue stretch at 1477 to 1519 (DADECVLFGPALCQNGRCSNIVPGYICLCNPGYHYDASSRKCQ) folds into the EGF-like 17; calcium-binding domain. Residues 1520 to 1559 (DHNECQDLACENGECVNQEGSFHCLCNPPLTLDLSGQRCV) form the EGF-like 18; calcium-binding domain. N-linked (GlcNAc...) asparagine glycosylation is present at N1560. A TB 4 domain is found at 1576 to 1628 (DICWKKVTNDVCSQPLRGHHTTYTECCCQDGEAWSQQCALCPPRSSEVYAQLC). Disulfide bonds link C1578–C1601, C1587–C1613, C1602–C1616, and C1603–C1628. Residues 1631–1813 (ARIEAERGAG…PGPPHCAAKE (183 aa)) are C-terminal domain. A disordered region spans residues 1671-1717 (YLGPEDTAPEPPFSNPASQPGDNTPVLEPPLQPSELQPHYLASHSEP). Residues 1725–1765 (QAEECGILNGCENGRCVRVREGYTCDCFEGFQLDAPTLACV) enclose the EGF-like 19; calcium-binding domain. 6 disulfides stabilise this stretch: C1729–C1740, C1735–C1749, C1751–C1764, C1770–C1785, C1780–C1794, and C1796–C1809. The EGF-like 20; calcium-binding domain maps to 1766–1810 (DVNECEDLNGPARLCAHGHCENTEGSYRCHCSPGYVAEPGPPHCA).

It belongs to the LTBP family. In terms of assembly, forms part of the large latent transforming growth factor beta precursor complex; removal is essential for activation of complex. Interacts with SDC4. Interacts (via C-terminal domain) with FBN1 (via N-terminal domain) in a Ca(+2)-dependent manner. In terms of processing, N-Glycosylated. Contains hydroxylated asparagine residues. As to expression, expressed in the anterior chamber of the eye.

The protein resides in the secreted. The protein localises to the extracellular space. It is found in the extracellular matrix. Its function is as follows. May play an integral structural role in elastic-fiber architectural organization and/or assembly. The polypeptide is Latent-transforming growth factor beta-binding protein 2 (Ltbp2) (Mus musculus (Mouse)).